A 294-amino-acid chain; its full sequence is N-acetylmuramic acid 6-phosphate etherase (294 aa).

The SIS domain occupies 54-217 (VIQSFEEEGR…STASMIGVGK (164 aa)). The active-site Proton donor is the Glu-82. Glu-113 is an active-site residue.

The protein belongs to the GCKR-like family. MurNAc-6-P etherase subfamily. In terms of assembly, homodimer.

It catalyses the reaction N-acetyl-D-muramate 6-phosphate + H2O = N-acetyl-D-glucosamine 6-phosphate + (R)-lactate. Its pathway is amino-sugar metabolism; N-acetylmuramate degradation. Its function is as follows. Specifically catalyzes the cleavage of the D-lactyl ether substituent of MurNAc 6-phosphate, producing GlcNAc 6-phosphate and D-lactate. The polypeptide is N-acetylmuramic acid 6-phosphate etherase (Bacillus thuringiensis subsp. konkukian (strain 97-27)).